A 143-amino-acid chain; its full sequence is Large ribosomal subunit protein uL15 (143 aa).

Residues 1–52 (MKLNTLAPAAGSKSAPKRLGRGIGSGLGKTSGKGHKGQKARSGGYHKVGFEG) form a disordered region. Residues 21–31 (RGIGSGLGKTS) are compositionally biased toward gly residues.

The protein belongs to the universal ribosomal protein uL15 family. Part of the 50S ribosomal subunit.

In terms of biological role, binds to the 23S rRNA. The chain is Large ribosomal subunit protein uL15 from Francisella tularensis subsp. holarctica (strain FTNF002-00 / FTA).